Reading from the N-terminus, the 391-residue chain is Chaperone protein DnaJ (391 aa).

The J domain maps to 6–71 (CYYEVLKVER…NKRARYDQYG (66 aa)). The CR-type zinc-finger motif lies at 137 to 215 (GCHKDIVFRR…CRGTGTQNEK (79 aa)). Zn(2+) is bound by residues C150, C153, C167, C170, C189, C192, C203, and C206. 4 CXXCXGXG motif repeats span residues 150–157 (CDTCDGSG), 167–174 (CTMCGGQG), 189–196 (CPTCKGAG), and 203–210 (CGKCRGTG). The tract at residues 372-391 (FFDPEPEEAGTGSTDTEKDS) is disordered.

The protein belongs to the DnaJ family. Homodimer. Zn(2+) serves as cofactor.

It localises to the cytoplasm. In terms of biological role, participates actively in the response to hyperosmotic and heat shock by preventing the aggregation of stress-denatured proteins and by disaggregating proteins, also in an autonomous, DnaK-independent fashion. Unfolded proteins bind initially to DnaJ; upon interaction with the DnaJ-bound protein, DnaK hydrolyzes its bound ATP, resulting in the formation of a stable complex. GrpE releases ADP from DnaK; ATP binding to DnaK triggers the release of the substrate protein, thus completing the reaction cycle. Several rounds of ATP-dependent interactions between DnaJ, DnaK and GrpE are required for fully efficient folding. Also involved, together with DnaK and GrpE, in the DNA replication of plasmids through activation of initiation proteins. The protein is Chaperone protein DnaJ of Rhodopirellula baltica (strain DSM 10527 / NCIMB 13988 / SH1).